The primary structure comprises 357 residues: Protein RecA (357 aa).

Residue 74 to 81 coordinates ATP; it reads GPESSGKT.

Belongs to the RecA family.

Its subcellular location is the cytoplasm. Can catalyze the hydrolysis of ATP in the presence of single-stranded DNA, the ATP-dependent uptake of single-stranded DNA by duplex DNA, and the ATP-dependent hybridization of homologous single-stranded DNAs. It interacts with LexA causing its activation and leading to its autocatalytic cleavage. The chain is Protein RecA from Bordetella petrii (strain ATCC BAA-461 / DSM 12804 / CCUG 43448).